A 655-amino-acid chain; its full sequence is Methyl-accepting chemotaxis protein McpC (655 aa).

Residues 1–8 lie on the Cytoplasmic side of the membrane; it reads MFKKLHMK. A helical transmembrane segment spans residues 9-29; that stretch reads IAVFVSIMLIITVVLLMLSSY. At 30–276 the chain is on the extracellular side; the sequence is LTLKPMITED…LMWISDKMNR (247 aa). The Cache domain occupies 148–225; the sequence is WTEPYKDVVT…SNQGKNISKD (78 aa). The helical transmembrane segment at 277-297 threads the bilayer; that stretch reads ANLWISLIALIITIILSYFLA. One can recognise an HAMP domain in the interval 298–350; the sequence is KTITGPIQQLIVKTKAVSAGDLTVRAESKSKDEVGILTRDFNLMVENMKEMVE. Topologically, residues 298–655 are cytoplasmic; that stretch reads KTITGPIQQL…LMNTIAKFTL (358 aa). Residues 369–619 form the Methyl-accepting transducer domain; it reads VAAETNETSG…ESAAAAEEVN (251 aa).

This sequence belongs to the methyl-accepting chemotaxis (MCP) protein family. In terms of assembly, interacts with FloT. In terms of processing, some glutamine residues are deamidated to glutamate by CheD and subsequently methylated.

It localises to the cell membrane. It is found in the membrane raft. Functionally, chemotactic-signal transducers respond to changes in the concentration of attractants and repellents in the environment, transduce a signal from the outside to the inside of the cell, and facilitate sensory adaptation through the variation of the level of methylation. All amino acids serve as attractants in B.subtilis, they appear to cause an increase in the turnover methyl groups, leading to methylation of an unidentified acceptor, while repellents have been shown to cause a decrease in methyl group turnover. The methyl groups are added by a methyltransferase and removed by a methylesterase. McpC is required for taxis to cysteine, proline, threonine, glycine, serine, lysine, valine and arginine and for aspartate, glutamine, histidine and glutamate. Primarily mediates response to positive stimulus of PTS carbohydrates. Greatly influences the duration or magnitude of the response to negative PTS carbohydrate stimulus. This chain is Methyl-accepting chemotaxis protein McpC (mcpC), found in Bacillus subtilis (strain 168).